A 517-amino-acid chain; its full sequence is L-amino-acid oxidase (517 aa).

The first 19 residues, 1–19 (MNVFSIFSLVFLAAFGSCA), serve as a signal peptide directing secretion. A disulfide bond links cysteine 29 and cysteine 192. Residues 62–63 (MA), 82–83 (EA), arginine 90, and 106–109 (GPMR) contribute to the FAD site. Arginine 109 is a substrate binding site. N-linked (GlcNAc...) asparagine glycosylation is present at asparagine 191. Position 280 (valine 280) interacts with FAD. Cysteine 350 and cysteine 431 form a disulfide bridge. Asparagine 380 is a glycosylation site (N-linked (GlcNAc...) asparagine). A substrate-binding site is contributed by tyrosine 391. Residues glutamate 476 and 483–488 (GWLDST) contribute to the FAD site. 483-484 (GW) contributes to the substrate binding site.

The protein belongs to the flavin monoamine oxidase family. FIG1 subfamily. As to quaternary structure, monomer. This is in contrast with most of its orthologs, that are non-covalently linked homodimers. FAD serves as cofactor. Post-translationally, N-glycosylated. As to expression, expressed by the venom gland.

The protein localises to the secreted. The catalysed reaction is an L-alpha-amino acid + O2 + H2O = a 2-oxocarboxylate + H2O2 + NH4(+). It carries out the reaction L-leucine + O2 + H2O = 4-methyl-2-oxopentanoate + H2O2 + NH4(+). It catalyses the reaction L-phenylalanine + O2 + H2O = 3-phenylpyruvate + H2O2 + NH4(+). The enzyme catalyses L-tryptophan + O2 + H2O = indole-3-pyruvate + H2O2 + NH4(+). The catalysed reaction is L-methionine + O2 + H2O = 4-methylsulfanyl-2-oxobutanoate + H2O2 + NH4(+). It carries out the reaction L-isoleucine + O2 + H2O = (S)-3-methyl-2-oxopentanoate + H2O2 + NH4(+). It catalyses the reaction L-arginine + O2 + H2O = 5-guanidino-2-oxopentanoate + H2O2 + NH4(+). The enzyme catalyses L-aspartate + O2 + H2O = oxaloacetate + H2O2 + NH4(+). The catalysed reaction is L-histidine + O2 + H2O = 3-(imidazol-5-yl)pyruvate + H2O2 + NH4(+). It carries out the reaction L-asparagine + O2 + H2O = 2-oxosuccinamate + H2O2 + NH4(+). It catalyses the reaction L-tyrosine + O2 + H2O = 3-(4-hydroxyphenyl)pyruvate + H2O2 + NH4(+). The enzyme catalyses L-glutamine + O2 + H2O = 2-oxoglutaramate + H2O2 + NH4(+). The catalysed reaction is L-alanine + O2 + H2O = pyruvate + H2O2 + NH4(+). It carries out the reaction L-lysine + O2 + H2O = 6-amino-2-oxohexanoate + H2O2 + NH4(+). It catalyses the reaction L-glutamate + O2 + H2O = H2O2 + 2-oxoglutarate + NH4(+). Its function is as follows. Catalyzes an oxidative deamination of predominantly hydrophobic and aromatic L-amino acids, thus producing hydrogen peroxide that may contribute to the diverse toxic effects of this enzyme. Is highly active against L-Tyr, L-Asp, L-Phe, L-Glu, L-Trp, L-His, L-Gln, L-Ile, L-Met, L-Leu and moderately active against L-Lys, L-Arg, L-Ala and L-Asn. Exhibits diverse biological activities, such as edema, inflammatory cell infiltration, cytotoxicity and apoptosis, as well as induction of platelet aggregation. Effects of snake L-amino oxidases on platelets are controversial, since they either induce aggregation or inhibit agonist-induced aggregation. These different effects are probably due to different experimental conditions. This protein may also induce hemorrhage, hemolysis, and have antibacterial and antiparasitic activities. The polypeptide is L-amino-acid oxidase (Bungarus fasciatus (Banded krait)).